A 320-amino-acid polypeptide reads, in one-letter code: Ferrochelatase (320 aa).

Residues His-194 and Glu-275 each coordinate Fe cation.

Belongs to the ferrochelatase family.

Its subcellular location is the cytoplasm. The enzyme catalyses heme b + 2 H(+) = protoporphyrin IX + Fe(2+). It participates in porphyrin-containing compound metabolism; protoheme biosynthesis; protoheme from protoporphyrin-IX: step 1/1. Its function is as follows. Catalyzes the ferrous insertion into protoporphyrin IX. This Cronobacter sakazakii (strain ATCC BAA-894) (Enterobacter sakazakii) protein is Ferrochelatase.